The chain runs to 64 residues: Beta sliding clamp (64 aa).

It belongs to the beta sliding clamp family. In terms of assembly, forms a ring-shaped head-to-tail homodimer around DNA which binds and tethers DNA polymerases and other proteins to the DNA. The DNA replisome complex has a single clamp-loading complex (3 tau and 1 each of delta, delta', psi and chi subunits) which binds 3 Pol III cores (1 core on the leading strand and 2 on the lagging strand) each with a beta sliding clamp dimer. Additional proteins in the replisome are other copies of gamma, psi and chi, Ssb, DNA helicase and RNA primase.

It localises to the cytoplasm. Functionally, confers DNA tethering and processivity to DNA polymerases and other proteins. Acts as a clamp, forming a ring around DNA (a reaction catalyzed by the clamp-loading complex) which diffuses in an ATP-independent manner freely and bidirectionally along dsDNA. Initially characterized for its ability to contact the catalytic subunit of DNA polymerase III (Pol III), a complex, multichain enzyme responsible for most of the replicative synthesis in bacteria; Pol III exhibits 3'-5' exonuclease proofreading activity. The beta chain is required for initiation of replication as well as for processivity of DNA replication. The protein is Beta sliding clamp (dnaN) of Actinobacillus pleuropneumoniae (Haemophilus pleuropneumoniae).